A 117-amino-acid chain; its full sequence is MVRVKRGVTKHRRHKKILELAKGYQLGRSKLYRHANEAVLKALRYQYRDRRARKRDFRRLWIIRINAAARQHGMPYRDFIHGLKQAGVEVDRKMLADLAVHDPSAFGQLVEVARRAL.

This sequence belongs to the bacterial ribosomal protein bL20 family.

Binds directly to 23S ribosomal RNA and is necessary for the in vitro assembly process of the 50S ribosomal subunit. It is not involved in the protein synthesizing functions of that subunit. This is Large ribosomal subunit protein bL20 from Thermomicrobium roseum (strain ATCC 27502 / DSM 5159 / P-2).